The chain runs to 256 residues: Small ribosomal subunit protein uS2 (256 aa).

Belongs to the universal ribosomal protein uS2 family.

The chain is Small ribosomal subunit protein uS2 from Acidiphilium cryptum (strain JF-5).